Consider the following 408-residue polypeptide: Putative odorant receptor 92a (408 aa).

The Cytoplasmic segment spans residues 1-52 (MLFRKRKPKSDDEVITFDELTRFPMTFYKTIGEDLYSDRDPNVIRRYLLRFY). The helical transmembrane segment at 53–73 (LVLGFLNFNAYVVGEIAYFIV) threads the bilayer. H74 is a topological domain (extracellular). The chain crosses the membrane as a helical span at residues 75 to 95 (IMSTTTLLEATAVAPCIGFSF). Topologically, residues 96–144 (MADFKQFGLTVNRKRLVRLLDDLKEIFPLDLEAQRKYNVSFYRKHMNRV) are cytoplasmic. Residues 145 to 165 (MTLFTILCMTYTSSFSFYPAI) traverse the membrane as a helical segment. Topologically, residues 166–209 (KSTIKYYLMGSEIFERNYGFHILFPYDAETDLTVYWFSYWGLAH) are extracellular. A helical transmembrane segment spans residues 210–230 (CAYVAGVSYVCVDLLLIATIT). Topologically, residues 231-276 (QLTMHFNFIANDLEAYEGGDHTDEENIKYLHNLVVYHARALDLSEE) are cytoplasmic. Residues 277–301 (VNNIFSFLILWNFIAASLVICFAGF) form a helical membrane-spanning segment. The Extracellular segment spans residues 302 to 310 (QITASNVED). Residues 311–331 (IVLYFIFFSASLVQVFVVCYY) traverse the membrane as a helical segment. Topologically, residues 332–378 (GDEMISSSSRIGHSAFNQNWLPCSTKYKRILQFIIARSQKPASIRPP) are cytoplasmic. Residues 379–399 (TFPPISFNTFMKVISMSYQFF) form a helical membrane-spanning segment. At 400–408 (ALLRTTYYG) the chain is on the extracellular side.

Belongs to the insect chemoreceptor superfamily. Heteromeric odorant receptor channel (TC 1.A.69) family. Or49a subfamily. In terms of assembly, interacts with Orco. Complexes exist early in the endomembrane system in olfactory sensory neurons (OSNs), coupling these complexes to the conserved ciliary trafficking pathway.

The protein resides in the cell membrane. Its function is as follows. Odorant receptor which mediates acceptance or avoidance behavior, depending on its substrates. The odorant receptor repertoire encodes a large collection of odor stimuli that vary widely in identity, intensity, and duration. May form a complex with Orco to form odorant-sensing units, providing sensitive and prolonged odorant signaling and calcium permeability. The polypeptide is Putative odorant receptor 92a (Or92a) (Drosophila melanogaster (Fruit fly)).